The primary structure comprises 405 residues: Phosphopentomutase (405 aa).

Mn(2+) contacts are provided by D10, D305, H310, D346, H347, and H358.

This sequence belongs to the phosphopentomutase family. Mn(2+) is required as a cofactor.

The protein resides in the cytoplasm. It catalyses the reaction 2-deoxy-alpha-D-ribose 1-phosphate = 2-deoxy-D-ribose 5-phosphate. The enzyme catalyses alpha-D-ribose 1-phosphate = D-ribose 5-phosphate. It participates in carbohydrate degradation; 2-deoxy-D-ribose 1-phosphate degradation; D-glyceraldehyde 3-phosphate and acetaldehyde from 2-deoxy-alpha-D-ribose 1-phosphate: step 1/2. Functionally, isomerase that catalyzes the conversion of deoxy-ribose 1-phosphate (dRib-1-P) and ribose 1-phosphate (Rib-1-P) to deoxy-ribose 5-phosphate (dRib-5-P) and ribose 5-phosphate (Rib-5-P), respectively. This chain is Phosphopentomutase, found in Methylobacterium sp. (strain 4-46).